The chain runs to 348 residues: Protein RecA (348 aa).

Position 64-71 (64-71) interacts with ATP; it reads GPESSGKT. Over residues 324–335 the composition is skewed to basic and acidic residues; the sequence is EYEIDGSNKEPL. The disordered stretch occupies residues 324–348; the sequence is EYEIDGSNKEPLAETEETLSLLDDE. Positions 336-348 are enriched in acidic residues; the sequence is AETEETLSLLDDE.

It belongs to the RecA family.

The protein localises to the cytoplasm. Functionally, can catalyze the hydrolysis of ATP in the presence of single-stranded DNA, the ATP-dependent uptake of single-stranded DNA by duplex DNA, and the ATP-dependent hybridization of homologous single-stranded DNAs. It interacts with LexA causing its activation and leading to its autocatalytic cleavage. In Listeria ivanovii, this protein is Protein RecA.